Reading from the N-terminus, the 277-residue chain is Diaminopimelate epimerase (277 aa).

Substrate contacts are provided by Asn-11 and Asn-72. Cys-81 functions as the Proton donor in the catalytic mechanism. Substrate contacts are provided by residues 82-83, Asn-189, and 207-208; these read GN and ER. Cys-217 acts as the Proton acceptor in catalysis. Position 218–219 (218–219) interacts with substrate; sequence GT.

The protein belongs to the diaminopimelate epimerase family. Homodimer.

It localises to the cytoplasm. It carries out the reaction (2S,6S)-2,6-diaminopimelate = meso-2,6-diaminopimelate. It participates in amino-acid biosynthesis; L-lysine biosynthesis via DAP pathway; DL-2,6-diaminopimelate from LL-2,6-diaminopimelate: step 1/1. Its function is as follows. Catalyzes the stereoinversion of LL-2,6-diaminopimelate (L,L-DAP) to meso-diaminopimelate (meso-DAP), a precursor of L-lysine and an essential component of the bacterial peptidoglycan. This Hydrogenobaculum sp. (strain Y04AAS1) protein is Diaminopimelate epimerase.